The following is a 1428-amino-acid chain: Gag-Pol polyprotein (1428 aa).

A lipid anchor (N-myristoyl glycine; by host) is attached at glycine 2. The interval 7-31 is interaction with Gp41; sequence VLSGKKLDSWEKIRLRPGGNKKYRL. An interaction with host CALM1 region spans residues 8–43; it reads LSGKKLDSWEKIRLRPGGNKKYRLKHLVWASRELEK. Residues 12–19 are interaction with host AP3D1; it reads KLDSWEKI. An interaction with membrane phosphatidylinositol 4,5-bisphosphate and RNA region spans residues 14–33; it reads DSWEKIRLRPGGNKKYRLKH. The Nuclear export signal motif lies at 16 to 22; the sequence is WEKIRLR. Positions 26 to 32 match the Nuclear localization signal motif; that stretch reads NKKYRLK. The segment at 73–77 is interaction with membrane phosphatidylinositol 4,5-bisphosphate; the sequence is EELRS. The tract at residues 108–130 is disordered; it reads QNKNKQRTQQAAANTGSSQNYPI. Positions 114–130 are enriched in polar residues; that stretch reads RTQQAAANTGSSQNYPI. A Phosphotyrosine; by host modification is found at tyrosine 128. Residues 185–223 are interaction with human PPIA/CYPA and NUP153; it reads NVVGGHQAAMQMLKDTINEEAAEWDRLHPVHAGPIPPGQ. A dimerization/Multimerization of capsid protein p24 region spans residues 273–359; that stretch reads YSPVSILDIR…GGPGHKARVL (87 aa). CCHC-type zinc fingers lie at residues 384-401 and 405-422; these read IKCF…NCRA and KGCW…DCTE. The interval 438–475 is disordered; the sequence is EAREFSSEQTRANSPTSRNLWDGGKDDLPCETGAERQG. Over residues 444 to 456 the composition is skewed to polar residues; it reads SEQTRANSPTSRN. Residues 460–475 are compositionally biased toward basic and acidic residues; it reads GGKDDLPCETGAERQG. The tract at residues 482 to 486 is dimerization of protease; it reads PQITL. Positions 501–570 constitute a Peptidase A2 domain; it reads IEALLDTGAD…TPVNIIGRNM (70 aa). Aspartate 506 functions as the For protease activity; shared with dimeric partner in the catalytic mechanism. 2 dimerization of protease regions span residues 530-536 and 569-581; these read GIGGFIK and NMLT…LNFP. Residues 624-814 form the Reverse transcriptase domain; the sequence is EGKISKIGPE…PPFLWMGYEL (191 aa). 3 residues coordinate Mg(2+): aspartate 690, aspartate 765, and aspartate 766. Residues 807–815 are RT 'primer grip'; the sequence is FLWMGYELH. The short motif at 978 to 994 is the Tryptophan repeat motif element; that stretch reads WEAWWMEYWQATWIPEW. The RNase H type-1 domain occupies 1014–1137; sequence IAGAETFYVD…VDKLVSSGIR (124 aa). The Mg(2+) site is built by aspartate 1023, glutamate 1058, aspartate 1078, and aspartate 1129. The Integrase-type zinc finger occupies 1143 to 1184; sequence DGIDKAQEDHEKYHCNWRAMASDFNLPPVVAKEIVASCNKCQ. Zn(2+) contacts are provided by histidine 1152, histidine 1156, cysteine 1180, and cysteine 1183. The 151-residue stretch at 1194–1344 folds into the Integrase catalytic domain; sequence VDCSPGIWQL…SAGERIIDII (151 aa). The Mg(2+) site is built by aspartate 1204, aspartate 1256, and glutamate 1292. Positions 1363–1410 form a DNA-binding region, integrase-type; that stretch reads FRVYYRDSRDPIWKGPAKLLWKGEGAVVIQDNSDIKVVPRRKAKIIRD.

Homotrimer; further assembles as hexamers of trimers. Interacts with gp41 (via C-terminus). Interacts with host CALM1; this interaction induces a conformational change in the Matrix protein, triggering exposure of the myristate group. Interacts with host AP3D1; this interaction allows the polyprotein trafficking to multivesicular bodies during virus assembly. Part of the pre-integration complex (PIC) which is composed of viral genome, matrix protein, Vpr and integrase. In terms of assembly, homodimer; the homodimer further multimerizes as homohexamers or homopentamers. Interacts with human PPIA/CYPA; This interaction stabilizes the capsid. Interacts with human NUP153. Interacts with host PDZD8; this interaction stabilizes the capsid. Interacts with monkey TRIM5; this interaction destabilizes the capsid. As to quaternary structure, homodimer, whose active site consists of two apposed aspartic acid residues. Heterodimer of p66 RT and p51 RT (RT p66/p51). Heterodimerization of RT is essential for DNA polymerase activity. The overall folding of the subdomains is similar in p66 RT and p51 RT but the spatial arrangements of the subdomains are dramatically different. In terms of assembly, homotetramer; may further associate as a homohexadecamer. Part of the pre-integration complex (PIC) which is composed of viral genome, matrix protein, Vpr and integrase. Interacts with human SMARCB1/INI1 and human PSIP1/LEDGF isoform 1. Interacts with human KPNA3; this interaction might play a role in nuclear import of the pre-integration complex. Interacts with human NUP153; this interaction might play a role in nuclear import of the pre-integration complex. The cofactor is Mg(2+). In terms of processing, specific enzymatic cleavages by the viral protease yield mature proteins. The protease is released by autocatalytic cleavage. The polyprotein is cleaved during and after budding, this process is termed maturation. Proteolytic cleavage of p66 RT removes the RNase H domain to yield the p51 RT subunit. Nucleocapsid protein p7 might be further cleaved after virus entry. Post-translationally, tyrosine phosphorylated presumably in the virion by a host kinase. Phosphorylation is apparently not a major regulator of membrane association. Phosphorylated possibly by host MAPK1; this phosphorylation is necessary for Pin1-mediated virion uncoating. In terms of processing, methylated by host PRMT6, impairing its function by reducing RNA annealing and the initiation of reverse transcription.

It localises to the host cell membrane. Its subcellular location is the host endosome. It is found in the host multivesicular body. The protein resides in the virion membrane. The protein localises to the host nucleus. It localises to the host cytoplasm. Its subcellular location is the virion. It catalyses the reaction Specific for a P1 residue that is hydrophobic, and P1' variable, but often Pro.. The enzyme catalyses Endohydrolysis of RNA in RNA/DNA hybrids. Three different cleavage modes: 1. sequence-specific internal cleavage of RNA. Human immunodeficiency virus type 1 and Moloney murine leukemia virus enzymes prefer to cleave the RNA strand one nucleotide away from the RNA-DNA junction. 2. RNA 5'-end directed cleavage 13-19 nucleotides from the RNA end. 3. DNA 3'-end directed cleavage 15-20 nucleotides away from the primer terminus.. It carries out the reaction 3'-end directed exonucleolytic cleavage of viral RNA-DNA hybrid.. The catalysed reaction is DNA(n) + a 2'-deoxyribonucleoside 5'-triphosphate = DNA(n+1) + diphosphate. Protease: The viral protease is inhibited by many synthetic protease inhibitors (PIs), such as amprenavir, atazanavir, indinavir, loprinavir, nelfinavir, ritonavir and saquinavir. Use of protease inhibitors in tritherapy regimens permit more ambitious therapeutic strategies. Reverse transcriptase/ribonuclease H: RT can be inhibited either by nucleoside RT inhibitors (NRTIs) or by non nucleoside RT inhibitors (NNRTIs). NRTIs act as chain terminators, whereas NNRTIs inhibit DNA polymerization by binding a small hydrophobic pocket near the RT active site and inducing an allosteric change in this region. Classical NRTIs are abacavir, adefovir (PMEA), didanosine (ddI), lamivudine (3TC), stavudine (d4T), tenofovir (PMPA), zalcitabine (ddC), and zidovudine (AZT). Classical NNRTIs are atevirdine (BHAP U-87201E), delavirdine, efavirenz (DMP-266), emivirine (I-EBU), and nevirapine (BI-RG-587). The tritherapies used as a basic effective treatment of AIDS associate two NRTIs and one NNRTI. Functionally, mediates, with Gag polyprotein, the essential events in virion assembly, including binding the plasma membrane, making the protein-protein interactions necessary to create spherical particles, recruiting the viral Env proteins, and packaging the genomic RNA via direct interactions with the RNA packaging sequence (Psi). Gag-Pol polyprotein may regulate its own translation, by the binding genomic RNA in the 5'-UTR. At low concentration, the polyprotein would promote translation, whereas at high concentration, the polyprotein would encapsidate genomic RNA and then shut off translation. Targets the polyprotein to the plasma membrane via a multipartite membrane-binding signal, that includes its myristoylated N-terminus. Matrix protein is part of the pre-integration complex. Implicated in the release from host cell mediated by Vpu. Binds to RNA. Its function is as follows. Forms the conical core that encapsulates the genomic RNA-nucleocapsid complex in the virion. Most core are conical, with only 7% tubular. The core is constituted by capsid protein hexamer subunits. The core is disassembled soon after virion entry. Host restriction factors such as TRIM5-alpha or TRIMCyp bind retroviral capsids and cause premature capsid disassembly, leading to blocks in reverse transcription. Capsid restriction by TRIM5 is one of the factors which restricts HIV-1 to the human species. Host PIN1 apparently facilitates the virion uncoating. On the other hand, interactions with PDZD8 or CYPA stabilize the capsid. In terms of biological role, encapsulates and protects viral dimeric unspliced genomic RNA (gRNA). Binds these RNAs through its zinc fingers. Acts as a nucleic acid chaperone which is involved in rearangement of nucleic acid secondary structure during gRNA retrotranscription. Also facilitates template switch leading to recombination. As part of the polyprotein, participates in gRNA dimerization, packaging, tRNA incorporation and virion assembly. Functionally, aspartyl protease that mediates proteolytic cleavages of Gag and Gag-Pol polyproteins during or shortly after the release of the virion from the plasma membrane. Cleavages take place as an ordered, step-wise cascade to yield mature proteins. This process is called maturation. Displays maximal activity during the budding process just prior to particle release from the cell. Also cleaves Nef and Vif, probably concomitantly with viral structural proteins on maturation of virus particles. Hydrolyzes host EIF4GI and PABP1 in order to shut off the capped cellular mRNA translation. The resulting inhibition of cellular protein synthesis serves to ensure maximal viral gene expression and to evade host immune response. Also mediates cleavage of host YTHDF3. Mediates cleavage of host CARD8, thereby activating the CARD8 inflammasome, leading to the clearance of latent HIV-1 in patient CD4(+) T-cells after viral reactivation; in contrast, HIV-1 can evade CARD8-sensing when its protease remains inactive in infected cells prior to viral budding. Multifunctional enzyme that converts the viral RNA genome into dsDNA in the cytoplasm, shortly after virus entry into the cell. This enzyme displays a DNA polymerase activity that can copy either DNA or RNA templates, and a ribonuclease H (RNase H) activity that cleaves the RNA strand of RNA-DNA heteroduplexes in a partially processive 3' to 5' endonucleasic mode. Conversion of viral genomic RNA into dsDNA requires many steps. A tRNA(3)-Lys binds to the primer-binding site (PBS) situated at the 5'-end of the viral RNA. RT uses the 3' end of the tRNA primer to perform a short round of RNA-dependent minus-strand DNA synthesis. The reading proceeds through the U5 region and ends after the repeated (R) region which is present at both ends of viral RNA. The portion of the RNA-DNA heteroduplex is digested by the RNase H, resulting in a ssDNA product attached to the tRNA primer. This ssDNA/tRNA hybridizes with the identical R region situated at the 3' end of viral RNA. This template exchange, known as minus-strand DNA strong stop transfer, can be either intra- or intermolecular. RT uses the 3' end of this newly synthesized short ssDNA to perform the RNA-dependent minus-strand DNA synthesis of the whole template. RNase H digests the RNA template except for two polypurine tracts (PPTs) situated at the 5'-end and near the center of the genome. It is not clear if both polymerase and RNase H activities are simultaneous. RNase H probably can proceed both in a polymerase-dependent (RNA cut into small fragments by the same RT performing DNA synthesis) and a polymerase-independent mode (cleavage of remaining RNA fragments by free RTs). Secondly, RT performs DNA-directed plus-strand DNA synthesis using the PPTs that have not been removed by RNase H as primers. PPTs and tRNA primers are then removed by RNase H. The 3' and 5' ssDNA PBS regions hybridize to form a circular dsDNA intermediate. Strand displacement synthesis by RT to the PBS and PPT ends produces a blunt ended, linear dsDNA copy of the viral genome that includes long terminal repeats (LTRs) at both ends. Its function is as follows. Catalyzes viral DNA integration into the host chromosome, by performing a series of DNA cutting and joining reactions. This enzyme activity takes place after virion entry into a cell and reverse transcription of the RNA genome in dsDNA. The first step in the integration process is 3' processing. This step requires a complex comprising the viral genome, matrix protein, Vpr and integrase. This complex is called the pre-integration complex (PIC). The integrase protein removes 2 nucleotides from each 3' end of the viral DNA, leaving recessed CA OH's at the 3' ends. In the second step, the PIC enters cell nucleus. This process is mediated through integrase and Vpr proteins, and allows the virus to infect a non dividing cell. This ability to enter the nucleus is specific of lentiviruses, other retroviruses cannot and rely on cell division to access cell chromosomes. In the third step, termed strand transfer, the integrase protein joins the previously processed 3' ends to the 5' ends of strands of target cellular DNA at the site of integration. The 5'-ends are produced by integrase-catalyzed staggered cuts, 5 bp apart. A Y-shaped, gapped, recombination intermediate results, with the 5'-ends of the viral DNA strands and the 3' ends of target DNA strands remaining unjoined, flanking a gap of 5 bp. The last step is viral DNA integration into host chromosome. This involves host DNA repair synthesis in which the 5 bp gaps between the unjoined strands are filled in and then ligated. Since this process occurs at both cuts flanking the HIV genome, a 5 bp duplication of host DNA is produced at the ends of HIV-1 integration. Alternatively, Integrase may catalyze the excision of viral DNA just after strand transfer, this is termed disintegration. The polypeptide is Gag-Pol polyprotein (gag-pol) (Human immunodeficiency virus type 1 group M subtype A (isolate U455) (HIV-1)).